We begin with the raw amino-acid sequence, 412 residues long: Tyrosine--tRNA ligase (412 aa).

A 'HIGH' region motif is present at residues 48-57; that stretch reads PSRPDLHLGH. A 'KMSKS' region motif is present at residues 232–236; that stretch reads KMSKS. Residue K235 coordinates ATP. Positions 342-405 constitute an S4 RNA-binding domain; it reads VGLLNLMRHA…GKRRFARIRP (64 aa).

It belongs to the class-I aminoacyl-tRNA synthetase family. TyrS type 2 subfamily. As to quaternary structure, homodimer.

Its subcellular location is the cytoplasm. The enzyme catalyses tRNA(Tyr) + L-tyrosine + ATP = L-tyrosyl-tRNA(Tyr) + AMP + diphosphate + H(+). Functionally, catalyzes the attachment of tyrosine to tRNA(Tyr) in a two-step reaction: tyrosine is first activated by ATP to form Tyr-AMP and then transferred to the acceptor end of tRNA(Tyr). In Salinibacter ruber (strain DSM 13855 / M31), this protein is Tyrosine--tRNA ligase.